The chain runs to 452 residues: Exodeoxyribonuclease 7 large subunit (452 aa).

Belongs to the XseA family. Heterooligomer composed of large and small subunits.

It localises to the cytoplasm. It carries out the reaction Exonucleolytic cleavage in either 5'- to 3'- or 3'- to 5'-direction to yield nucleoside 5'-phosphates.. Functionally, bidirectionally degrades single-stranded DNA into large acid-insoluble oligonucleotides, which are then degraded further into small acid-soluble oligonucleotides. In Bacillus cereus (strain G9842), this protein is Exodeoxyribonuclease 7 large subunit.